The sequence spans 22 residues: MNRIGMITTIITTTITTGNGAG.

Belongs to the thr operon leader peptide family.

Its function is as follows. This protein is involved in control of the biosynthesis of threonine. This chain is thr operon leader peptide, found in Klebsiella pneumoniae (strain 342).